Reading from the N-terminus, the 288-residue chain is GDSL esterase/lipase At3g43550 (288 aa).

An N-terminal signal peptide occupies residues 1 to 19 (MKLQIIWLALVLIAVETYA). N25 carries N-linked (GlcNAc...) asparagine glycosylation. The active-site Nucleophile is S37.

The protein belongs to the 'GDSL' lipolytic enzyme family.

It is found in the secreted. This Arabidopsis thaliana (Mouse-ear cress) protein is GDSL esterase/lipase At3g43550.